Reading from the N-terminus, the 833-residue chain is Leucine--tRNA ligase (833 aa).

The 'HIGH' region signature appears at 41–52 (PYPSGVGLHVGH). The 'KMSKS' region motif lies at 610–614 (KMSKS). Position 613 (lysine 613) interacts with ATP.

This sequence belongs to the class-I aminoacyl-tRNA synthetase family.

It is found in the cytoplasm. It catalyses the reaction tRNA(Leu) + L-leucine + ATP = L-leucyl-tRNA(Leu) + AMP + diphosphate. In Streptococcus pneumoniae serotype 2 (strain D39 / NCTC 7466), this protein is Leucine--tRNA ligase.